Consider the following 273-residue polypeptide: Exosome complex component MTR3 (273 aa).

The disordered stretch occupies residues 1–36 (MPGDHRRIRGPEESQPPQLYAAEDDETPAARDPTRL).

This sequence belongs to the RNase PH family. As to quaternary structure, component of the RNA exosome core complex (Exo-9), composed of EXOSC1, EXOSC2, EXOSC3, EXOSC4, EXOSC5, EXOSC6, EXOSC7, EXOSC8 and EXOSC9; within the complex interacts with EXOSC1, EXOSC7 and EXOSC8. The catalytically inactive RNA exosome core complex (Exo-9) associates with the catalytic subunit EXOSC10/RRP6. Exo-9 may associate with DIS3 to form the nucleolar exosome complex, or DIS3L to form the cytoplasmic exosome complex. Exo-9 is formed by a hexameric base ring consisting of the heterodimers EXOSC4-EXOSC9, EXOSC5-EXOSC8 and EXOSC6-EXOSC7, and a cap ring consisting of EXOSC1, EXOSC2 and EXOSC3. The RNA exosome complex associates with cofactors EXOSC10/RRP6, C1D/RRP47, MPHOSPH6/MPP6 and MTREX/MTR4.

Its subcellular location is the cytoplasm. It is found in the nucleus. It localises to the nucleolus. Its function is as follows. Non-catalytic component of the RNA exosome complex which has 3'-&gt;5' exoribonuclease activity and participates in a multitude of cellular RNA processing and degradation events. In the nucleus, the RNA exosome complex is involved in proper maturation of stable RNA species such as rRNA, snRNA and snoRNA, in the elimination of RNA processing by-products and non-coding 'pervasive' transcripts, such as antisense RNA species and promoter-upstream transcripts (PROMPTs), and of mRNAs with processing defects, thereby limiting or excluding their export to the cytoplasm. The RNA exosome may be involved in Ig class switch recombination (CSR) and/or Ig variable region somatic hypermutation (SHM) by targeting AICDA deamination activity to transcribed dsDNA substrates. In the cytoplasm, the RNA exosome complex is involved in general mRNA turnover and specifically degrades inherently unstable mRNAs containing AU-rich elements (AREs) within their 3' untranslated regions, and in RNA surveillance pathways, preventing translation of aberrant mRNAs. It seems to be involved in degradation of histone mRNA. The catalytic inactive RNA exosome core complex of 9 subunits (Exo-9) is proposed to play a pivotal role in the binding and presentation of RNA for ribonucleolysis, and to serve as a scaffold for the association with catalytic subunits and accessory proteins or complexes. In Mus musculus (Mouse), this protein is Exosome complex component MTR3 (Exosc6).